The sequence spans 119 residues: Large ribosomal subunit protein bL20 (119 aa).

The protein belongs to the bacterial ribosomal protein bL20 family.

Binds directly to 23S ribosomal RNA and is necessary for the in vitro assembly process of the 50S ribosomal subunit. It is not involved in the protein synthesizing functions of that subunit. This is Large ribosomal subunit protein bL20 from Bordetella petrii (strain ATCC BAA-461 / DSM 12804 / CCUG 43448).